The primary structure comprises 98 residues: Integration host factor subunit alpha (98 aa).

The protein belongs to the bacterial histone-like protein family. Heterodimer of an alpha and a beta chain.

This protein is one of the two subunits of integration host factor, a specific DNA-binding protein that functions in genetic recombination as well as in transcriptional and translational control. This is Integration host factor subunit alpha from Marinomonas sp. (strain MWYL1).